Reading from the N-terminus, the 181-residue chain is ATP synthase subunit delta (181 aa).

The protein belongs to the ATPase delta chain family. In terms of assembly, F-type ATPases have 2 components, F(1) - the catalytic core - and F(0) - the membrane proton channel. F(1) has five subunits: alpha(3), beta(3), gamma(1), delta(1), epsilon(1). F(0) has three main subunits: a(1), b(2) and c(10-14). The alpha and beta chains form an alternating ring which encloses part of the gamma chain. F(1) is attached to F(0) by a central stalk formed by the gamma and epsilon chains, while a peripheral stalk is formed by the delta and b chains.

The protein resides in the cell membrane. Its function is as follows. F(1)F(0) ATP synthase produces ATP from ADP in the presence of a proton or sodium gradient. F-type ATPases consist of two structural domains, F(1) containing the extramembraneous catalytic core and F(0) containing the membrane proton channel, linked together by a central stalk and a peripheral stalk. During catalysis, ATP synthesis in the catalytic domain of F(1) is coupled via a rotary mechanism of the central stalk subunits to proton translocation. This protein is part of the stalk that links CF(0) to CF(1). It either transmits conformational changes from CF(0) to CF(1) or is implicated in proton conduction. The chain is ATP synthase subunit delta from Lacticaseibacillus paracasei (strain ATCC 334 / BCRC 17002 / CCUG 31169 / CIP 107868 / KCTC 3260 / NRRL B-441) (Lactobacillus paracasei).